The primary structure comprises 1793 residues: Non-reducing polyketide synthase adaA (1793 aa).

The tract at residues 16–250 is N-terminal acylcarrier protein transacylase domain (SAT); the sequence is NDDLKALFRG…YSKSLALPVY (235 aa). The 434-residue stretch at 388–821 folds into the Ketosynthase family 3 (KS3) domain; it reads DSKLAIVGMA…GGNTTLVLED (434 aa). Catalysis depends on for beta-ketoacyl synthase activity residues cysteine 561, histidine 696, and histidine 739. Residues 923-1245 are malonyl-CoA:ACP transacylase (MAT) domain; that stretch reads VFTFTGQGAY…KSLCTLHLAG (323 aa). Residues 1312–1634 are product template (PT) domain; that stretch reads TSLIHQVTEE…RLLMDRFFSP (323 aa). The tract at residues 1316 to 1452 is N-terminal hotdog fold; sequence HQVTEETVDK…GSIKYPADPT (137 aa). The PKS/mFAS DH domain occupies 1316-1629; that stretch reads HQVTEETVDK…FRRVPRLLMD (314 aa). The active-site Proton acceptor; for dehydratase activity is histidine 1348. A C-terminal hotdog fold region spans residues 1482 to 1629; it reads KASTLSKPLA…FRRVPRLLMD (148 aa). The active-site Proton donor; for dehydratase activity is aspartate 1540. Low complexity predominate over residues 1642–1659; it reads AAPAPAPAAVPAVKKQPP. The tract at residues 1642–1714 is disordered; the sequence is AAPAPAPAAV…TTEQEAPVAD (73 aa). Over residues 1660-1681 the composition is skewed to polar residues; the sequence is TETIQPQAPKTEQKQDQLQLPN. Residues 1683–1706 are compositionally biased toward low complexity; that stretch reads ASAAPSTANSSSSPSSSGVATPTT. The Carrier domain occupies 1716-1793; sequence SAVTGVAGKC…DLTGWLEQYC (78 aa). The residue at position 1753 (serine 1753) is an O-(pantetheine 4'-phosphoryl)serine.

Requires pantetheine 4'-phosphate as cofactor.

The enzyme catalyses holo-[ACP] + 9 malonyl-CoA + acetyl-CoA + 9 H(+) = 3-(2,4-dioxopentyl)-3,6,8,9-tetrahydroxy-1-oxo-1,2,3,4-tetrahydroanthracene-2-carboxyl-[ACP] + 9 CO2 + 10 CoA + 2 H2O. Its pathway is secondary metabolite biosynthesis. Non-reducing polyketide synthase; part of the gene cluster that mediates the biosynthesis of the linear tetracyclic TAN-1612 neuropeptide Y receptor antagonist. The decaketide backbone of TAN-1612 is synthesized by the non-reducing polyketide synthase adaA via condensation of one acetyl-CoA starter unit with 9 malonyl-CoA units. The FAD-dependent monooxygenase adaC then performs hydroxylation at C2 while the polaketide chain is still attached to the NRPKS adaA. The alpha-hydroxylation step at C2 appears to be crucial for the following C18-C1 Claisen cyclization and release of the C9-hydroxyl version of TAN-1612 from the NRPKS adaA, two steps performed by the lactamase-like protein adaB. Finally, the O-methyltransferase adaD performs the C9 O-methylation to complete the biosynthesis of TAN-1612. In Aspergillus niger (strain ATCC MYA-4892 / CBS 513.88 / FGSC A1513), this protein is Non-reducing polyketide synthase adaA.